A 198-amino-acid polypeptide reads, in one-letter code: MGLNPTQVSTSGSPQVSQPATGVLDPRTGQPVGADDRYFLEINHELSDKGFFVAAADDLITWARTGSLMWMTFGLACCAVEMMQVSMPRYDVERFGFAPRASPRQSDVMIVAGTLTNKMAPALRKVYDQMPEPRYVISMGSCANGGGYYHYSYSVVRGCDRIVPVDIYVPGCPPTAEALLYGVLLLQKKIRRIGTIER.

The span at 1–20 shows a compositional bias: polar residues; the sequence is MGLNPTQVSTSGSPQVSQPA. Residues 1–29 are disordered; the sequence is MGLNPTQVSTSGSPQVSQPATGVLDPRTG. Residues cysteine 77, cysteine 78, cysteine 142, and cysteine 172 each contribute to the [4Fe-4S] cluster site.

It belongs to the complex I 20 kDa subunit family. In terms of assembly, NDH-1 is composed of 14 different subunits. Subunits NuoB, C, D, E, F, and G constitute the peripheral sector of the complex. The cofactor is [4Fe-4S] cluster.

The protein resides in the cell inner membrane. It carries out the reaction a quinone + NADH + 5 H(+)(in) = a quinol + NAD(+) + 4 H(+)(out). NDH-1 shuttles electrons from NADH, via FMN and iron-sulfur (Fe-S) centers, to quinones in the respiratory chain. The immediate electron acceptor for the enzyme in this species is believed to be ubiquinone. Couples the redox reaction to proton translocation (for every two electrons transferred, four hydrogen ions are translocated across the cytoplasmic membrane), and thus conserves the redox energy in a proton gradient. The protein is NADH-quinone oxidoreductase subunit B of Afipia carboxidovorans (strain ATCC 49405 / DSM 1227 / KCTC 32145 / OM5) (Oligotropha carboxidovorans).